A 78-amino-acid chain; its full sequence is Acyl carrier protein (78 aa).

Residues 1-76 (MSVAEKVKEI…DAISFIEKKK (76 aa)) form the Carrier domain. Ser-36 bears the O-(pantetheine 4'-phosphoryl)serine mark.

Belongs to the acyl carrier protein (ACP) family. 4'-phosphopantetheine is transferred from CoA to a specific serine of apo-ACP by AcpS. This modification is essential for activity because fatty acids are bound in thioester linkage to the sulfhydryl of the prosthetic group.

Its subcellular location is the cytoplasm. It participates in lipid metabolism; fatty acid biosynthesis. Functionally, carrier of the growing fatty acid chain in fatty acid biosynthesis. In Solidesulfovibrio magneticus (strain ATCC 700980 / DSM 13731 / RS-1) (Desulfovibrio magneticus), this protein is Acyl carrier protein.